Consider the following 372-residue polypeptide: GTP cyclohydrolase 1 type 2 homolog (372 aa).

Histidine 67, histidine 68, aspartate 106, histidine 332, and glutamate 335 together coordinate a divalent metal cation.

It belongs to the GTP cyclohydrolase I type 2/NIF3 family. Homohexamer.

The sequence is that of GTP cyclohydrolase 1 type 2 homolog from Halalkalibacterium halodurans (strain ATCC BAA-125 / DSM 18197 / FERM 7344 / JCM 9153 / C-125) (Bacillus halodurans).